The chain runs to 198 residues: MKQPSALSSLVEALRALPGVGPKSAQRIAYHLMQHDREGAERLGRSLLFATEHLQHCEKCNTFTEAQICEVCSDDERDPTLLCVVETPADQIMLEQTMTYRGLYFVLMGRLSPLDGIGPKEIHFDRLVRRASDGVVKEVVLATNFTNEGEATAHYLGQTLKARGLAVTRLARGVPVGGELEYVDAGTIARAMLDRRTM.

A C4-type zinc finger spans residues 57-72 (CEKCNTFTEAQICEVC). One can recognise a Toprim domain in the interval 80–175 (TLLCVVETPA…AVTRLARGVP (96 aa)).

The protein belongs to the RecR family.

May play a role in DNA repair. It seems to be involved in an RecBC-independent recombinational process of DNA repair. It may act with RecF and RecO. In Burkholderia vietnamiensis (strain G4 / LMG 22486) (Burkholderia cepacia (strain R1808)), this protein is Recombination protein RecR.